We begin with the raw amino-acid sequence, 386 residues long: Heat-inducible transcription repressor HrcA (386 aa).

It belongs to the HrcA family.

Its function is as follows. Negative regulator of class I heat shock genes (grpE-dnaK-dnaJ and groELS operons). Prevents heat-shock induction of these operons. This is Heat-inducible transcription repressor HrcA from Chlamydia felis (strain Fe/C-56) (Chlamydophila felis).